Consider the following 105-residue polypeptide: Cyclotide vibi-E (105 aa).

The first 9 residues, 1–9, serve as a signal peptide directing secretion; the sequence is AAFALPALA. The propeptide occupies 10 to 69; that stretch reads SSFEKDVISFRAIQAVLEKRGLSKLEDDPVLSALAHTKTIISNPVIEEALLNGANLKAGN. Residues 70–99 constitute a cross-link (cyclopeptide (Gly-Asn)); sequence GIPCAESCVWIPCTVTALIGCGCSNKVCYN. 3 disulfides stabilise this stretch: Cys73–Cys90, Cys77–Cys92, and Cys82–Cys97. The propeptide occupies 100-105; the sequence is SLQTKY.

Post-translationally, this is a cyclic peptide.

Functionally, probably participates in a plant defense mechanism. Has cytotoxic activity, active against a human lymphoma cell line with an IC(50) of 3.2 uM. The chain is Cyclotide vibi-E from Viola biflora (Yellow wood violet).